The primary structure comprises 257 residues: Aspartate/glutamate leucyltransferase (257 aa).

The protein belongs to the R-transferase family. Bpt subfamily.

It localises to the cytoplasm. It carries out the reaction N-terminal L-glutamyl-[protein] + L-leucyl-tRNA(Leu) = N-terminal L-leucyl-L-glutamyl-[protein] + tRNA(Leu) + H(+). The catalysed reaction is N-terminal L-aspartyl-[protein] + L-leucyl-tRNA(Leu) = N-terminal L-leucyl-L-aspartyl-[protein] + tRNA(Leu) + H(+). Its function is as follows. Functions in the N-end rule pathway of protein degradation where it conjugates Leu from its aminoacyl-tRNA to the N-termini of proteins containing an N-terminal aspartate or glutamate. This is Aspartate/glutamate leucyltransferase from Rhodopseudomonas palustris (strain BisB5).